The sequence spans 238 residues: 1-(5-phosphoribosyl)-5-[(5-phosphoribosylamino)methylideneamino] imidazole-4-carboxamide isomerase (238 aa).

The active-site Proton acceptor is Asp-8. The active-site Proton donor is the Asp-129.

The protein belongs to the HisA/HisF family.

The protein localises to the cytoplasm. It carries out the reaction 1-(5-phospho-beta-D-ribosyl)-5-[(5-phospho-beta-D-ribosylamino)methylideneamino]imidazole-4-carboxamide = 5-[(5-phospho-1-deoxy-D-ribulos-1-ylimino)methylamino]-1-(5-phospho-beta-D-ribosyl)imidazole-4-carboxamide. It participates in amino-acid biosynthesis; L-histidine biosynthesis; L-histidine from 5-phospho-alpha-D-ribose 1-diphosphate: step 4/9. The sequence is that of 1-(5-phosphoribosyl)-5-[(5-phosphoribosylamino)methylideneamino] imidazole-4-carboxamide isomerase from Anaeromyxobacter dehalogenans (strain 2CP-C).